Reading from the N-terminus, the 743-residue chain is MAGEDRVEQESSVPADVREKHALLAEQIEEHRFRYYVKDQPVVSDADFDRQLRSLEALEEEHPSLRTPDSPTQKVAGPYRTEFTSVEHRERMLSLDNAFDDEELAAWADRVAKDVGTPDHHFLCELKVDGLAVNLTYEHGRLTRAATRGDGRTGEDITPNVRTIAEIPHRLKGEDIPALVEIRGEVFFPMEDFEELNARLVAADDKPFANPRNAAAGSLRQKDPKVTATRPLHMVVHGIGAHEGLSIDRLSAAYDLLHTWGLPTARHNKVVDSLAGVREFIAHYGENRHSVEHEIDGVVVKLDEIPLQGRLGSTSRAPRWAIAWKYAPEEVNTKLVNIRVGVGRTGRVTPYAQVEPVEVAGSEVEFATLHNQNVVKAKGVLIGDTVVIRKAGEVIPEILGPVVDLRDGTEKAFEMPTHCPECGTELRPMKEADIDLRCPNARTCPAQLRERVFYLAGRKSLDIDHFGYVAAAALTRPLEPAEPVLKDESDLFSLTVEQLLPIRAYVLDQDSGLPKRDPKTGEEKIATVFANQQGEPKKNAVAMLEGIAAAKDAPLARVLTGLSIRHVGPVAAQELARQFRSIERIDEATEEELAAADGVGPTIAASVKQWFAEDWHREIVRKWREAGVRMADEGSDEDEGPRPLEGLTVVVTGTLAGHTRDGAKEALQALGAKVAGSVSKKTAFVVVGDNPGSKYDKAMQLKVPVLDEDGFAILLEQGPERAKEAALPVPEAAPAADPENSGE.

NAD(+) is bound by residues 45–49, 94–95, and E125; these read DADFD and SL. K127 functions as the N6-AMP-lysine intermediate in the catalytic mechanism. NAD(+) is bound by residues R148, E185, K301, and K325. Residues C419, C422, C438, and C444 each coordinate Zn(2+). One can recognise a BRCT domain in the interval 639–728; it reads EGPRPLEGLT…PERAKEAALP (90 aa). Residues 720–743 are disordered; sequence ERAKEAALPVPEAAPAADPENSGE. Residues 725–743 show a composition bias toward low complexity; it reads AALPVPEAAPAADPENSGE.

This sequence belongs to the NAD-dependent DNA ligase family. LigA subfamily. Mg(2+) is required as a cofactor. Requires Mn(2+) as cofactor.

The catalysed reaction is NAD(+) + (deoxyribonucleotide)n-3'-hydroxyl + 5'-phospho-(deoxyribonucleotide)m = (deoxyribonucleotide)n+m + AMP + beta-nicotinamide D-nucleotide.. DNA ligase that catalyzes the formation of phosphodiester linkages between 5'-phosphoryl and 3'-hydroxyl groups in double-stranded DNA using NAD as a coenzyme and as the energy source for the reaction. It is essential for DNA replication and repair of damaged DNA. This is DNA ligase 2 from Streptomyces griseus subsp. griseus (strain JCM 4626 / CBS 651.72 / NBRC 13350 / KCC S-0626 / ISP 5235).